The following is an 806-amino-acid chain: Transitional endoplasmic reticulum ATPase (806 aa).

N-acetylalanine is present on alanine 2. Phosphoserine is present on residues serine 3 and serine 7. Residue lysine 8 forms a Glycyl lysine isopeptide (Lys-Gly) (interchain with G-Cter in SUMO2) linkage. Residue serine 13 is modified to Phosphoserine. Lysine 18 is covalently cross-linked (Glycyl lysine isopeptide (Lys-Gly) (interchain with G-Cter in SUMO2)). Serine 37 bears the Phosphoserine mark. Residue 247 to 253 (PGTGKTL) coordinates ATP. Position 315 is an N6,N6,N6-trimethyllysine; by VCPKMT (lysine 315). Positions 348 and 384 each coordinate ATP. Residue threonine 436 is modified to Phosphothreonine. Position 462 is a phosphoserine (serine 462). 2 positions are modified to N6-acetyllysine: lysine 502 and lysine 505. 521-526 (GCGKTL) serves as a coordination point for ATP. Lysine 668 carries the post-translational modification N6-acetyllysine; alternate. At lysine 668 the chain carries N6-succinyllysine; alternate. The residue at position 702 (serine 702) is a Phosphoserine. Residues 708 to 727 (RRERERQTNPSAMEVEEDDP) form a disordered region. Position 754 is an N6-acetyllysine (lysine 754). The interval 768 to 806 (FGSFRFPSGNQGGAGPSQGSGGGTGGNVYTEDNDDDLYG) is disordered. A phosphoserine mark is found at serine 770, serine 775, and serine 787. The segment covering 777–793 (NQGGAGPSQGSGGGTGG) has biased composition (gly residues). The segment at 797–806 (TEDNDDDLYG) is interaction with UBXN6. The PIM motif signature appears at 802–806 (DDLYG). Residue tyrosine 805 is modified to Phosphotyrosine.

This sequence belongs to the AAA ATPase family. In terms of assembly, homohexamer. Forms a ring-shaped particle of 12.5 nm diameter, that displays 6-fold radial symmetry. Interacts with NSFL1C-like protein p37; the complex has membrane fusion activity and is required for Golgi and endoplasmic reticulum biogenesis. Interacts with RHBDD1 (via C-terminal domain). Interacts with SELENOS and SYVN1, as well as with DERL1 (via SHP-box motif), DERL2 and DERL3; which probably transfer misfolded proteins from the ER to VCP. Interacts with SVIP and DERL1. Component of a complex required to couple retrotranslocation, ubiquitination and deglycosylation composed of NGLY1, SAKS1, AMFR, VCP and RAD23B. Part of a complex composed of STUB1/CHIP, VCP/p97, CHRNA3, and UBXN2A that modulates the ubiquitination and endoplasmic reticulum-associated degradation (ERAD) of CHRNA3. Within the complex UBXN2A acts as a scaffold protein required for the interaction of CHRNA3 with VCP/p97, this interaction also inhibits CHRNA3 ubiquitination by STUB1/CHIP and subsequently ERAD. Interacts with UBXN2A (via UBX domain); the interaction is required for the interaction of CHRNA3 in the STUB1-VCP-UBXN2A complex. Directly interacts with UBXN4 and RNF19A. Interacts with CASR. Interacts with UBE4B and YOD1. Interacts with clathrin. Interacts with RNF103. Interacts with TRIM13 and TRIM21. Component of a VCP/p97-AMFR/gp78 complex that participates in the final step of the endoplasmic reticulum-associated degradation (ERAD) of HMGCR. Interacts directly with AMFR/gp78 (via its VIM). Interacts with SPRTN; leading to recruitment to stalled replication forks. Part of a ternary complex containing STX5A, NSFL1C and VCP. NSFL1C forms a homotrimer that binds to one end of a VCP homohexamer. The complex binds to membranes enriched in phosphatidylethanolamine-containing lipids and promotes Golgi membrane fusion. Binds to a heterodimer of NPLOC4 and UFD1, binding to this heterodimer inhibits Golgi-membrane fusion. Interaction with VCIP135 leads to dissociation of the complex via ATP hydrolysis by VCP. Part of a ternary complex containing NPLOC4, UFD1 and VCP. Interacts with WASHC5. Interacts with UBOX5. Interacts (via N-terminus) with UBXN7, UBXN8, and probably several other UBX domain-containing proteins (via UBX domains); the interactions are mutually exclusive with VIM-dependent interactions such as those with AMFR and SELENOS. Forms a complex with UBQLN1 and UBXN4. Interacts (via the PIM motif) with RNF31 (via the PUB domain). Interacts with RIGI and RNF125; interaction takes place when RIGI is ubiquitinated via 'Lys-63'-linked ubiquitin on its CARD domains, leading to recruit RNF125 and promote ubiquitination and degradation of RIGI. Interacts with BAG6. Interacts with UBXN10. Interacts with UBXN6; the interaction with UBXN6 is direct and competitive with UFD1. Forms a ternary complex with CAV1 and UBXN6. Interacts with PLAA, UBXN6 and YOD1; may form a complex involved in macroautophagy. Interacts with ANKZF1. Interacts with ubiquitin-binding protein FAF1. Interacts with ZFAND2B (via VIM motif); the interaction is direct. Interacts with ZFAND1 (via its ubiquitin-like region); this interaction occurs in an arsenite-dependent manner. Interacts with CCDC47. Interacts with LMBR1L and UBAC2. Interacts with ATXN3. Interacts with TEX264; bridging VCP to covalent DNA-protein cross-links (DPCs). In terms of processing, phosphorylated by tyrosine kinases in response to T-cell antigen receptor activation. Phosphorylated in mitotic cells. Post-translationally, ISGylated. Methylation at Lys-315 catalyzed by VCPKMT is increased in the presence of ASPSCR1. Lys-315 methylation may decrease ATPase activity.

The protein localises to the cytoplasm. It is found in the cytosol. The protein resides in the endoplasmic reticulum. Its subcellular location is the nucleus. It localises to the stress granule. It catalyses the reaction ATP + H2O = ADP + phosphate + H(+). Necessary for the fragmentation of Golgi stacks during mitosis and for their reassembly after mitosis. Involved in the formation of the transitional endoplasmic reticulum (tER). The transfer of membranes from the endoplasmic reticulum to the Golgi apparatus occurs via 50-70 nm transition vesicles which derive from part-rough, part-smooth transitional elements of the endoplasmic reticulum (tER). Vesicle budding from the tER is an ATP-dependent process. The ternary complex containing UFD1, VCP and NPLOC4 binds ubiquitinated proteins and is necessary for the export of misfolded proteins from the ER to the cytoplasm, where they are degraded by the proteasome. The NPLOC4-UFD1-VCP complex regulates spindle disassembly at the end of mitosis and is necessary for the formation of a closed nuclear envelope. Regulates E3 ubiquitin-protein ligase activity of RNF19A. Component of the VCP/p97-AMFR/gp78 complex that participates in the final step of the sterol-mediated ubiquitination and endoplasmic reticulum-associated degradation (ERAD) of HMGCR. Mediates the endoplasmic reticulum-associated degradation of CHRNA3 in cortical neurons as part of the STUB1-VCP-UBXN2A complex. Involved in endoplasmic reticulum stress-induced pre-emptive quality control, a mechanism that selectively attenuates the translocation of newly synthesized proteins into the endoplasmic reticulum and reroutes them to the cytosol for proteasomal degradation. Involved in clearance process by mediating G3BP1 extraction from stress granules. Also involved in DNA damage response: recruited to double-strand breaks (DSBs) sites in a RNF8- and RNF168-dependent manner and promotes the recruitment of TP53BP1 at DNA damage sites. Recruited to stalled replication forks by SPRTN: may act by mediating extraction of DNA polymerase eta (POLH) to prevent excessive translesion DNA synthesis and limit the incidence of mutations induced by DNA damage. Together with SPRTN metalloprotease, involved in the repair of covalent DNA-protein cross-links (DPCs) during DNA synthesis. Involved in interstrand cross-link repair in response to replication stress by mediating unloading of the ubiquitinated CMG helicase complex. Mediates extraction of PARP1 trapped to chromatin: recognizes and binds ubiquitinated PARP1 and promotes its removal. Required for cytoplasmic retrotranslocation of stressed/damaged mitochondrial outer-membrane proteins and their subsequent proteasomal degradation. Essential for the maturation of ubiquitin-containing autophagosomes and the clearance of ubiquitinated protein by autophagy. Acts as a negative regulator of type I interferon production by interacting with RIGI: interaction takes place when RIGI is ubiquitinated via 'Lys-63'-linked ubiquitin on its CARD domains, leading to recruit RNF125 and promote ubiquitination and degradation of RIGI. May play a role in the ubiquitin-dependent sorting of membrane proteins to lysosomes where they undergo degradation. May more particularly play a role in caveolins sorting in cells. By controlling the steady-state expression of the IGF1R receptor, indirectly regulates the insulin-like growth factor receptor signaling pathway. The polypeptide is Transitional endoplasmic reticulum ATPase (Vcp) (Rattus norvegicus (Rat)).